Consider the following 899-residue polypeptide: Auxin response factor 25 (899 aa).

The interval 1–20 is disordered; the sequence is MKLSPPASADMPQALPENDG. The TF-B3 DNA-binding region spans 132 to 234; it reads FCKTLTASDT…QLLLGIRRAN (103 aa). Low complexity predominate over residues 546 to 564; that stretch reads RQHVLQEQSSQEMQQQLPS. The segment at 546–586 is disordered; sequence RQHVLQEQSSQEMQQQLPSSDHHVADVASESGSAPQAQSSL. The span at 575 to 586 shows a compositional bias: polar residues; sequence ESGSAPQAQSSL. The PB1 domain maps to 766–850; it reads ATFVKVYKSG…WCIKILSPQE (85 aa).

Belongs to the ARF family. Homodimers and heterodimers. Expressed in roots, culms, leaves and young panicles.

Its subcellular location is the nucleus. Auxin response factors (ARFs) are transcriptional factors that bind specifically to the DNA sequence 5'-TGTCTC-3' found in the auxin-responsive promoter elements (AuxREs). The protein is Auxin response factor 25 (ARF25) of Oryza sativa subsp. japonica (Rice).